The following is a 278-amino-acid chain: Secreted RxLR effector protein 151 (278 aa).

Residues M1 to C18 form the signal peptide. Positions R49–R64 match the RxLR-dEER motif.

This sequence belongs to the RxLR effector family.

Its subcellular location is the secreted. The protein localises to the host endoplasmic reticulum membrane. Secreted effector that completely suppresses the host cell death induced by cell death-inducing proteins. The polypeptide is Secreted RxLR effector protein 151 (Plasmopara viticola (Downy mildew of grapevine)).